The primary structure comprises 150 residues: Large ribosomal subunit protein bL9 (150 aa).

It belongs to the bacterial ribosomal protein bL9 family.

Its function is as follows. Binds to the 23S rRNA. The sequence is that of Large ribosomal subunit protein bL9 from Leuconostoc citreum (strain KM20).